We begin with the raw amino-acid sequence, 650 residues long: tRNA-dihydrouridine(47) synthase [NAD(P)(+)]-like (650 aa).

Disordered regions lie at residues 1–24 (MAEG…GALE) and 46–120 (EAKG…NYDK). Ala-2 carries the post-translational modification N-acetylalanine. Composition is skewed to basic and acidic residues over residues 48-58 (KGQEKTCRETE) and 70-79 (PEAKRIRLED). The span at 101–113 (KRARGQNKGRPHV) shows a compositional bias: basic residues. 2 C3H1-type zinc fingers span residues 118 to 148 (YDKN…HDVG) and 156 to 186 (ADLG…HLRP). Residues 235-284 (FSQGPTPAAAVPEGTAAEGAPRQENCGAQQVPAGPGTSTPPSSPVRTCGP) form a disordered region. Residue Ser-236 is modified to Phosphoserine. At Thr-273 the chain carries Phosphothreonine. Residues Ser-276 and Ser-277 each carry the phosphoserine modification. FMN is bound by residues 311–313 (PLT) and Gln-365. Residue Cys-396 is the Proton donor of the active site. Residue Lys-416 forms a Glycyl lysine isopeptide (Lys-Gly) (interchain with G-Cter in SUMO2) linkage. FMN contacts are provided by residues Lys-435, His-465, 497–499 (NGD), and 520–521 (AR).

The protein belongs to the Dus family. Dus3 subfamily. Requires FMN as cofactor.

The catalysed reaction is 5,6-dihydrouridine(47) in tRNA + NAD(+) = uridine(47) in tRNA + NADH + H(+). It carries out the reaction 5,6-dihydrouridine(47) in tRNA + NADP(+) = uridine(47) in tRNA + NADPH + H(+). It catalyses the reaction a 5,6-dihydrouridine in mRNA + NAD(+) = a uridine in mRNA + NADH + H(+). The enzyme catalyses a 5,6-dihydrouridine in mRNA + NADP(+) = a uridine in mRNA + NADPH + H(+). Functionally, catalyzes the synthesis of dihydrouridine, a modified base, in various RNAs, such as tRNAs, mRNAs and some long non-coding RNAs (lncRNAs). Mainly modifies the uridine in position 47 (U47) in the D-loop of most cytoplasmic tRNAs. Also able to mediate the formation of dihydrouridine in some mRNAs, thereby regulating their translation. This Homo sapiens (Human) protein is tRNA-dihydrouridine(47) synthase [NAD(P)(+)]-like.